A 415-amino-acid polypeptide reads, in one-letter code: Glutamyl-tRNA reductase (415 aa).

Substrate contacts are provided by residues 49–52, S104, 109–111, and Q115; these read TCNR and EPQ. C50 serves as the catalytic Nucleophile. 184-189 contacts NADP(+); that stretch reads GAGEMI.

The protein belongs to the glutamyl-tRNA reductase family. As to quaternary structure, homodimer.

It catalyses the reaction (S)-4-amino-5-oxopentanoate + tRNA(Glu) + NADP(+) = L-glutamyl-tRNA(Glu) + NADPH + H(+). It participates in porphyrin-containing compound metabolism; protoporphyrin-IX biosynthesis; 5-aminolevulinate from L-glutamyl-tRNA(Glu): step 1/2. In terms of biological role, catalyzes the NADPH-dependent reduction of glutamyl-tRNA(Glu) to glutamate 1-semialdehyde (GSA). The sequence is that of Glutamyl-tRNA reductase from Neisseria meningitidis serogroup C / serotype 2a (strain ATCC 700532 / DSM 15464 / FAM18).